Reading from the N-terminus, the 419-residue chain is L-rhamnose isomerase (419 aa).

Mn(2+) contacts are provided by His262, Asp294, and Asp296.

It belongs to the rhamnose isomerase family. As to quaternary structure, homotetramer. It depends on Mn(2+) as a cofactor.

It is found in the cytoplasm. It carries out the reaction L-rhamnopyranose = L-rhamnulose. Its pathway is carbohydrate degradation; L-rhamnose degradation; glycerone phosphate from L-rhamnose: step 1/3. Functionally, catalyzes the interconversion of L-rhamnose and L-rhamnulose. This chain is L-rhamnose isomerase, found in Escherichia coli O7:K1 (strain IAI39 / ExPEC).